The sequence spans 155 residues: Photosystem II extrinsic protein V (155 aa).

A signal peptide spans 1–20; it reads MFVKMIGWLVLFLFAHQTWA. Heme c is bound by residues Cys-50, Cys-53, His-54, and His-105.

The protein belongs to the cytochrome c family. PsbV subfamily. PSII is composed of 1 copy each of membrane proteins PsbA, PsbB, PsbC, PsbD, PsbE, PsbF, PsbH, PsbI, PsbJ, PsbK, PsbL, PsbM, PsbT, PsbY, PsbZ, Psb30/Ycf12, at least 3 peripheral proteins of the oxygen-evolving complex and a large number of cofactors. It forms dimeric complexes. The extrinsic subunits in red algae are PsbO (OEC33), PsbQ', cytochrome c-550 and PsbU. The cofactor is heme c.

It localises to the plastid. The protein localises to the chloroplast thylakoid membrane. Functionally, one of the extrinsic, lumenal subunits of photosystem II (PSII). PSII is a light-driven water plastoquinone oxidoreductase, using light energy to abstract electrons from H(2)O, generating a proton gradient subsequently used for ATP formation. The extrinsic proteins stabilize the structure of photosystem II oxygen-evolving complex (OEC), the ion environment of oxygen evolution and protect the OEC against heat-induced inactivation. Unlike the T.vulcanus ortholog, it does not bind by itself to PSII, but requires all extrinsic members of the OEC. The sequence is that of Photosystem II extrinsic protein V from Cyanidium caldarium (Red alga).